Consider the following 349-residue polypeptide: UDP-N-acetylenolpyruvoylglucosamine reductase (349 aa).

Positions 25–197 (GIAARARFAA…VAVTFRLPKQ (173 aa)) constitute an FAD-binding PCMH-type domain. R173 is an active-site residue. The active-site Proton donor is the S249. Residue E345 is part of the active site.

This sequence belongs to the MurB family. FAD serves as cofactor.

The protein resides in the cytoplasm. The enzyme catalyses UDP-N-acetyl-alpha-D-muramate + NADP(+) = UDP-N-acetyl-3-O-(1-carboxyvinyl)-alpha-D-glucosamine + NADPH + H(+). The protein operates within cell wall biogenesis; peptidoglycan biosynthesis. Its function is as follows. Cell wall formation. The chain is UDP-N-acetylenolpyruvoylglucosamine reductase from Burkholderia orbicola (strain MC0-3).